The sequence spans 217 residues: ATP-dependent Clp protease proteolytic subunit (217 aa).

The active-site Nucleophile is the serine 119. Residue histidine 144 is part of the active site.

The protein belongs to the peptidase S14 family. In terms of assembly, fourteen ClpP subunits assemble into 2 heptameric rings which stack back to back to give a disk-like structure with a central cavity, resembling the structure of eukaryotic proteasomes.

It is found in the cytoplasm. It carries out the reaction Hydrolysis of proteins to small peptides in the presence of ATP and magnesium. alpha-casein is the usual test substrate. In the absence of ATP, only oligopeptides shorter than five residues are hydrolyzed (such as succinyl-Leu-Tyr-|-NHMec, and Leu-Tyr-Leu-|-Tyr-Trp, in which cleavage of the -Tyr-|-Leu- and -Tyr-|-Trp bonds also occurs).. In terms of biological role, cleaves peptides in various proteins in a process that requires ATP hydrolysis. Has a chymotrypsin-like activity. Plays a major role in the degradation of misfolded proteins. This chain is ATP-dependent Clp protease proteolytic subunit, found in Bordetella petrii (strain ATCC BAA-461 / DSM 12804 / CCUG 43448).